Consider the following 307-residue polypeptide: Ribosomal protein uL3 glutamine methyltransferase (307 aa).

This sequence belongs to the protein N5-glutamine methyltransferase family. PrmB subfamily.

It carries out the reaction L-glutaminyl-[ribosomal protein uL3] + S-adenosyl-L-methionine = N(5)-methyl-L-glutaminyl-[ribosomal protein uL3] + S-adenosyl-L-homocysteine + H(+). Its function is as follows. Methylates large ribosomal subunit protein uL3 on a specific glutamine residue. The sequence is that of Ribosomal protein uL3 glutamine methyltransferase from Burkholderia pseudomallei (strain K96243).